Here is a 278-residue protein sequence, read N- to C-terminus: ADP-dependent (S)-NAD(P)H-hydrate dehydratase (278 aa).

Residues 4-276 (DDDLVRQVIR…KAIPSWMKKL (273 aa)) enclose the YjeF C-terminal domain. (6S)-NADPHX-binding residues include Ala-39, Gly-102, and His-152. Gly-216 is a binding site for AMP. Asp-217 lines the (6S)-NADPHX pocket.

It belongs to the NnrD/CARKD family. As to quaternary structure, homotetramer. Requires Mg(2+) as cofactor.

The catalysed reaction is (6S)-NADHX + ADP = AMP + phosphate + NADH + H(+). It carries out the reaction (6S)-NADPHX + ADP = AMP + phosphate + NADPH + H(+). In terms of biological role, catalyzes the dehydration of the S-form of NAD(P)HX at the expense of ADP, which is converted to AMP. Together with NAD(P)HX epimerase, which catalyzes the epimerization of the S- and R-forms, the enzyme allows the repair of both epimers of NAD(P)HX, a damaged form of NAD(P)H that is a result of enzymatic or heat-dependent hydration. This Streptococcus thermophilus protein is ADP-dependent (S)-NAD(P)H-hydrate dehydratase.